Consider the following 485-residue polypeptide: Homeobox protein unplugged (485 aa).

Disordered regions lie at residues 1–65 (MERP…QEQE), 114–157 (PAGH…DTRF), and 212–325 (GMAQ…RRTA). Acidic residues predominate over residues 54–64 (RDQEQEAEQEQ). Residues 114–128 (PAGHPAAQQPQAQAQ) show a composition bias toward low complexity. Polar residues-rich tracts occupy residues 223–234 (QAHSSPAKSGSH) and 254–267 (DSCS…SPRN). The span at 284 to 293 (DSEDCSDDEG) shows a compositional bias: acidic residues. Residues 308–317 (SQGNGSSSNS) show a composition bias toward low complexity. Residues 319-378 (SRRRRTAFTSEQLLELEREFHAKKYLSLTERSQIATSLKLSEVQVKIWFQNRRAKWKRVK) constitute a DNA-binding region (homeobox).

As to expression, expressed in the neuroectodermal and mesectodermal cells at the ventral midline of stage 8 embryos, Subsequently, expression domains in the CNS widen and have their most anterior border in the posterior deutocerebrum. Oc/otd and unpg are mutual repressors at the interface of their brain-specific expression domains. Expression fades during germ band retraction and is then restricted to subset of cells by stage 14. Expressed in the founder cells of the cerebral branch within the first tracheal metamere. Outside the CNS, expression is seen in two clusters of ectodermal cells located laterally within the labial and first thoracic segments of stage 9 embryos. By stage 13, the expression is detected in a few cells close to the dorsal midline of the embryos.

It localises to the nucleus. Plays a regulatory role in neural branching of the tracheae: segment-specific aspects of these neural branching patterns appear to be generated by homeotic regulation of expression. May have a role with oc/otd in the postembryonic development of the brain. This Drosophila melanogaster (Fruit fly) protein is Homeobox protein unplugged.